Here is a 64-residue protein sequence, read N- to C-terminus: Large ribosomal subunit protein uL30 (64 aa).

The disordered stretch occupies residues 1–22; sequence MAKAAKTIKVEQTRSAIRRQHS.

It belongs to the universal ribosomal protein uL30 family. As to quaternary structure, part of the 50S ribosomal subunit.

This is Large ribosomal subunit protein uL30 from Nitrobacter hamburgensis (strain DSM 10229 / NCIMB 13809 / X14).